The primary structure comprises 189 residues: GTPase HRas (189 aa).

Position 10–17 (10–17 (GAKGVGKS)) interacts with GTP. The Effector region motif lies at 32–40 (YDPTIEDSY). GTP-binding positions include 57–61 (DTAGQ) and 116–119 (NKCD). S-palmitoyl cysteine; by host attachment occurs at residues Cys-181 and Cys-184. Residue Cys-186 is modified to Cysteine methyl ester; by host. The S-farnesyl cysteine; by host moiety is linked to residue Cys-186. The propeptide at 187–189 (VLS) is removed in mature form.

This sequence belongs to the small GTPase superfamily. Ras family.

It is found in the host cell membrane. The enzyme catalyses GTP + H2O = GDP + phosphate + H(+). With respect to regulation, alternates between an inactive form bound to GDP and an active form bound to GTP. Activated by a guanine nucleotide-exchange factor (GEF) and inactivated by a GTPase-activating protein (GAP). This Moloney murine sarcoma virus (MoMSV) protein is GTPase HRas (H-RAS).